The chain runs to 59 residues: Antitoxin RelB4 (59 aa).

Residues Val-38 to Lys-59 are disordered. The segment covering Gln-50–Lys-59 has biased composition (pro residues).

Functionally, antitoxin component of a type II toxin-antitoxin (TA) system. Neutralizes the effect of cognate toxin RelE4, but no other RelE or ParE toxin. The sequence is that of Antitoxin RelB4 (relB4) from Caulobacter vibrioides (strain ATCC 19089 / CIP 103742 / CB 15) (Caulobacter crescentus).